The sequence spans 117 residues: Immunoglobulin lambda variable 10-54 (117 aa).

Positions 1-21 are cleaved as a signal peptide; it reads MPWALLLLTLLTHSAVSVVQA. Positions 20–43 are framework-1; sequence QAGLTQPPSVSKGLRQTATLTCTG. An Ig-like domain is found at 22 to 117; it reads GLTQPPSVSK…CSALDSSLSA (96 aa). A disulfide bridge links cysteine 41 with cysteine 108. The tract at residues 44–52 is complementarity-determining-1; that stretch reads NSNIVGNQG. The segment at 53–69 is framework-2; that stretch reads AAWLQQHQGHPPKLLSY. The tract at residues 70–72 is complementarity-determining-2; that stretch reads RNN. The interval 73 to 108 is framework-3; that stretch reads NRPSGISERFSASRSGNTASLTITGLQPEDEADYYC. The segment at 109-117 is complementarity-determining-3; that stretch reads SALDSSLSA.

Immunoglobulins are composed of two identical heavy chains and two identical light chains; disulfide-linked.

It localises to the secreted. The protein localises to the cell membrane. In terms of biological role, v region of the variable domain of immunoglobulin light chains that participates in the antigen recognition. Immunoglobulins, also known as antibodies, are membrane-bound or secreted glycoproteins produced by B lymphocytes. In the recognition phase of humoral immunity, the membrane-bound immunoglobulins serve as receptors which, upon binding of a specific antigen, trigger the clonal expansion and differentiation of B lymphocytes into immunoglobulins-secreting plasma cells. Secreted immunoglobulins mediate the effector phase of humoral immunity, which results in the elimination of bound antigens. The antigen binding site is formed by the variable domain of one heavy chain, together with that of its associated light chain. Thus, each immunoglobulin has two antigen binding sites with remarkable affinity for a particular antigen. The variable domains are assembled by a process called V-(D)-J rearrangement and can then be subjected to somatic hypermutations which, after exposure to antigen and selection, allow affinity maturation for a particular antigen. The chain is Immunoglobulin lambda variable 10-54 from Homo sapiens (Human).